Here is a 243-residue protein sequence, read N- to C-terminus: Sugar fermentation stimulation protein homolog (243 aa).

It belongs to the SfsA family.

This is Sugar fermentation stimulation protein homolog from Bdellovibrio bacteriovorus (strain ATCC 15356 / DSM 50701 / NCIMB 9529 / HD100).